Here is a 105-residue protein sequence, read N- to C-terminus: Large ribosomal subunit protein uL24 (105 aa).

Belongs to the universal ribosomal protein uL24 family. Part of the 50S ribosomal subunit.

One of two assembly initiator proteins, it binds directly to the 5'-end of the 23S rRNA, where it nucleates assembly of the 50S subunit. Functionally, one of the proteins that surrounds the polypeptide exit tunnel on the outside of the subunit. The polypeptide is Large ribosomal subunit protein uL24 (Acinetobacter baumannii (strain AB307-0294)).